Reading from the N-terminus, the 319-residue chain is tRNA U34 carboxymethyltransferase (319 aa).

Carboxy-S-adenosyl-L-methionine contacts are provided by residues lysine 88, tryptophan 102, lysine 107, glycine 126, 176–177, methionine 192, tyrosine 196, and arginine 311; that span reads LE.

The protein belongs to the class I-like SAM-binding methyltransferase superfamily. CmoB family. As to quaternary structure, homotetramer.

The catalysed reaction is carboxy-S-adenosyl-L-methionine + 5-hydroxyuridine(34) in tRNA = 5-carboxymethoxyuridine(34) in tRNA + S-adenosyl-L-homocysteine + H(+). Functionally, catalyzes carboxymethyl transfer from carboxy-S-adenosyl-L-methionine (Cx-SAM) to 5-hydroxyuridine (ho5U) to form 5-carboxymethoxyuridine (cmo5U) at position 34 in tRNAs. The chain is tRNA U34 carboxymethyltransferase from Pseudomonas syringae pv. syringae (strain B728a).